We begin with the raw amino-acid sequence, 62 residues long: Large ribosomal subunit protein eL24 (62 aa).

Residues Cys6, Cys9, Cys32, and Cys36 each coordinate Zn(2+). The C4-type zinc finger occupies Cys6 to Cys36.

It belongs to the eukaryotic ribosomal protein eL24 family. In terms of assembly, part of the 50S ribosomal subunit. Forms a cluster with proteins L3 and L14. It depends on Zn(2+) as a cofactor.

Functionally, binds to the 23S rRNA. The sequence is that of Large ribosomal subunit protein eL24 from Methanococcus maripaludis (strain C5 / ATCC BAA-1333).